The primary structure comprises 430 residues: Inactive metallocarboxypeptidase ECM14 (430 aa).

The signal sequence occupies residues 1–24 (MLHMNSLWGCFLFVLLAVTGAVQG). A propeptide spanning residues 25–105 (LQEDYSEYAV…TLPTSQMMAR (81 aa)) is cleaved from the precursor. N-linked (GlcNAc...) asparagine glycosylation is present at N41. A Peptidase M14 domain is found at 120–425 (EYRDLDTIYM…AALKYFCDFL (306 aa)). Residues H182 and E185 each contribute to the Zn(2+) site. Residues 182 to 185 (HARE), R240, and 257 to 258 (DH) contribute to the substrate site. C251 and C272 are joined by a disulfide. N-linked (GlcNAc...) asparagine glycosylation occurs at N295. H310 contributes to the Zn(2+) binding site. 311 to 312 (SY) serves as a coordination point for substrate.

The protein belongs to the peptidase M14 family. Zn(2+) is required as a cofactor. In terms of processing, N-glycosylated.

It localises to the vacuole. Its subcellular location is the secreted. In terms of biological role, inactive carboxypeptidase that may play a role in cell wall organization and biogenesis. This is Inactive metallocarboxypeptidase ECM14 from Saccharomyces cerevisiae (strain ATCC 204508 / S288c) (Baker's yeast).